The primary structure comprises 565 residues: UV-stimulated scaffold protein A homolog (565 aa).

Positions 11–156 (RKNLNRILQE…VTLRKTKFVD (146 aa)) are VHS-like. A coiled-coil region spans residues 155 to 215 (VDYENGEKKI…ELETTMEMLV (61 aa)). Residues 441 to 468 (DRECLAKLPSGALCKRKDMFKCPLHGPL) form a UVSSA-type zinc finger. The Zn(2+) site is built by cysteine 444, cysteine 454, cysteine 462, and histidine 465. Residues 480–510 (DEDRLKEIDRKERKRLKEAEEFSRKIVKEYE) adopt a coiled-coil conformation. 2 disordered regions span residues 510-530 (ESKT…SRLQ) and 542-565 (VSAD…FSHL).

The protein belongs to the UVSSA family.

The protein localises to the chromosome. Factor involved in transcription-coupled nucleotide excision repair (TC-NER) in response to UV damage. TC-NER allows RNA polymerase II-blocking lesions to be rapidly removed from the transcribed strand of active genes. The polypeptide is UV-stimulated scaffold protein A homolog (Caenorhabditis briggsae).